Reading from the N-terminus, the 292-residue chain is Probable endonuclease lcl3 (292 aa).

The segment at 1 to 27 is disordered; sequence MRWPPWSSESTNDEQKQTPSSWLSSAA. Over residues 17–27 the composition is skewed to polar residues; that stretch reads QTPSSWLSSAA. A helical membrane pass occupies residues 45 to 61; the sequence is IIPTVVLTSGILIAVRF. Residues 83–250 form the TNase-like domain; sequence RSIFGQVTSV…KKRARGLWKD (168 aa). Arg134 is a catalytic residue. Ca(2+) is bound at residue Asp139. Active-site residues include Glu142 and Arg182. A disordered region spans residues 257-292; it reads GWESPREYKNRMGMGDPLPIEKGNGKGNGKGKIGQK. Residues 281 to 292 are compositionally biased toward gly residues; that stretch reads GKGNGKGKIGQK.

It belongs to the LCL3 family.

The protein resides in the mitochondrion. It is found in the membrane. This is Probable endonuclease lcl3 (lcl3) from Penicillium rubens (strain ATCC 28089 / DSM 1075 / NRRL 1951 / Wisconsin 54-1255) (Penicillium chrysogenum).